The primary structure comprises 396 residues: Phosphoglycerate kinase (396 aa).

Substrate is bound by residues Asp21–Asn23, Arg36, His59–Arg62, Arg114, and Arg147. Residues Lys197, Glu319, and Gly349–Thr352 each bind ATP.

Belongs to the phosphoglycerate kinase family. As to quaternary structure, monomer.

It is found in the cytoplasm. It carries out the reaction (2R)-3-phosphoglycerate + ATP = (2R)-3-phospho-glyceroyl phosphate + ADP. The protein operates within carbohydrate degradation; glycolysis; pyruvate from D-glyceraldehyde 3-phosphate: step 2/5. The chain is Phosphoglycerate kinase from Jannaschia sp. (strain CCS1).